The chain runs to 391 residues: MSLNPRDVVIVDFGRTPMGRSKGGMHRNTRAETMSAHLISKLLERNPKVDPAEVEDVIWGCVNQTLEQGWNIARMASLMTQIPHTSAAQTVSRLCGSSMSALHTAAQAIQTGNGDVFVIGGVEHMGHVGMMHGVDPNPHLSLYAAKASGMMGLTAEMLGKMHGISREAQDKFGARSHQLAWKATQEGKFKDEIIPMEGYDENGFLKVFDFDETIRPETTVETLAQLKPAFNPKGGTVTAGTSSQITDGASCMIVMSAQRAQDLGIQPMAVIRSMAVAGVDPAIMGYGPVPSTNKALKRAGLTIADIDFVELNEAFAAQALPVLKDLKLLDKMDEKVNLHGGAIALGHPFGCSGARISGTLLNVMKQNGGTLGVSTMCVGLGQGITTVFERV.

Cys95 serves as the catalytic Acyl-thioester intermediate. Residues His347 and Cys377 each act as proton acceptor in the active site.

It belongs to the thiolase-like superfamily. Thiolase family. In terms of assembly, heterotetramer of two alpha chains (FadB) and two beta chains (FadA).

It is found in the cytoplasm. It carries out the reaction an acyl-CoA + acetyl-CoA = a 3-oxoacyl-CoA + CoA. It participates in lipid metabolism; fatty acid beta-oxidation. In terms of biological role, catalyzes the final step of fatty acid oxidation in which acetyl-CoA is released and the CoA ester of a fatty acid two carbons shorter is formed. This Pseudomonas aeruginosa (strain UCBPP-PA14) protein is 3-ketoacyl-CoA thiolase.